Consider the following 541-residue polypeptide: Chaperonin GroEL 2 (541 aa).

ATP is bound by residues 29–32 (TLGP), 86–90 (DGTTT), G413, 476–478 (NAA), and D492.

The protein belongs to the chaperonin (HSP60) family. Forms a cylinder of 14 subunits composed of two heptameric rings stacked back-to-back. Interacts with the co-chaperonin GroES.

Its subcellular location is the secreted. It is found in the capsule. The protein resides in the cell surface. It localises to the cell wall. It catalyses the reaction ATP + H2O + a folded polypeptide = ADP + phosphate + an unfolded polypeptide.. Functionally, together with its co-chaperonin GroES, plays an essential role in assisting protein folding. The GroEL-GroES system forms a nano-cage that allows encapsulation of the non-native substrate proteins and provides a physical environment optimized to promote and accelerate protein folding. The sequence is that of Chaperonin GroEL 2 from Mycobacterium avium (strain 104).